The sequence spans 338 residues: L-serine dehydratase (338 aa).

At K39 the chain carries N6-(pyridoxal phosphate)lysine.

It belongs to the serine/threonine dehydratase family. Pyridoxal 5'-phosphate is required as a cofactor.

The protein resides in the cytoplasm. It carries out the reaction L-serine = pyruvate + NH4(+). Its pathway is carbohydrate biosynthesis; gluconeogenesis. The chain is L-serine dehydratase (SDL1) from Saccharomyces cerevisiae (strain YJM789) (Baker's yeast).